The primary structure comprises 162 residues: Protein-export protein SecB (162 aa).

This sequence belongs to the SecB family. Homotetramer, a dimer of dimers. One homotetramer interacts with 1 SecA dimer.

Its subcellular location is the cytoplasm. In terms of biological role, one of the proteins required for the normal export of preproteins out of the cell cytoplasm. It is a molecular chaperone that binds to a subset of precursor proteins, maintaining them in a translocation-competent state. It also specifically binds to its receptor SecA. The polypeptide is Protein-export protein SecB (Pseudomonas savastanoi pv. phaseolicola (strain 1448A / Race 6) (Pseudomonas syringae pv. phaseolicola (strain 1448A / Race 6))).